A 312-amino-acid chain; its full sequence is Olfactory receptor 8K3 (312 aa).

Residues 1–25 (MEQHNLTTVNEFILTGITDIAELQA) lie on the Extracellular side of the membrane. N-linked (GlcNAc...) asparagine glycosylation is present at Asn5. The chain crosses the membrane as a helical span at residues 26-46 (PLFALFLMIYVISVMGNLGMI). Topologically, residues 47 to 54 (VLTKLDSR) are cytoplasmic. The helical transmembrane segment at 55 to 75 (LQTPMYFFLRHLAFMDLGYST) threads the bilayer. Topologically, residues 76–99 (TVGPKMLVNFVVDKNIISYYFCAT) are extracellular. The cysteines at positions 97 and 189 are disulfide-linked. A helical transmembrane segment spans residues 100 to 120 (QLAFFLVFIGSELFILSAMSY). At 121–139 (DLYVAICNPLLYTVIMSRR) the chain is on the cytoplasmic side. The chain crosses the membrane as a helical span at residues 140 to 160 (VCQVLVAIPYLYCTFISLLVT). The Extracellular segment spans residues 161-197 (IKIFTLSFCGYNVISHFYCDSLPLLPLLCSNTHEIEL). Residues 198 to 217 (IILIFAAIDLISSLLIVLLS) traverse the membrane as a helical segment. Residues 218–236 (YLLILVAILRMNSAGRQKA) lie on the Cytoplasmic side of the membrane. A helical transmembrane segment spans residues 237 to 257 (FSTCGAHLTVVIVFYGTLLFM). The Extracellular portion of the chain corresponds to 258 to 270 (YVQPKSSHSFDTD). Residues 271 to 291 (KVASIFYTLVIPMLNPLIYSL) form a helical membrane-spanning segment. Topologically, residues 292 to 312 (RNKDVKYALRRTWNNLCNIFV) are cytoplasmic.

This sequence belongs to the G-protein coupled receptor 1 family.

The protein resides in the cell membrane. Its function is as follows. Odorant receptor. The polypeptide is Olfactory receptor 8K3 (OR8K3) (Homo sapiens (Human)).